A 396-amino-acid chain; its full sequence is S-adenosylmethionine synthase (396 aa).

Residue glutamate 12 coordinates Mg(2+). ATP is bound at residue histidine 18. Glutamate 46 is a binding site for K(+). Glutamate 59 and glutamine 102 together coordinate L-methionine. ATP is bound by residues 170–172 (DGK), 238–241 (SGRF), aspartate 249, 255–256 (RK), alanine 272, lysine 276, and lysine 280. L-methionine is bound at residue aspartate 249. Residue lysine 280 participates in L-methionine binding.

The protein belongs to the AdoMet synthase family. Homotetramer. It depends on Mn(2+) as a cofactor. Requires Mg(2+) as cofactor. The cofactor is Co(2+). K(+) is required as a cofactor.

It localises to the cytoplasm. The catalysed reaction is L-methionine + ATP + H2O = S-adenosyl-L-methionine + phosphate + diphosphate. The protein operates within amino-acid biosynthesis; S-adenosyl-L-methionine biosynthesis; S-adenosyl-L-methionine from L-methionine: step 1/1. Catalyzes the formation of S-adenosylmethionine from methionine and ATP. The reaction comprises two steps that are both catalyzed by the same enzyme: formation of S-adenosylmethionine (AdoMet) and triphosphate, and subsequent hydrolysis of the triphosphate. The chain is S-adenosylmethionine synthase (SAMS) from Triticum aestivum (Wheat).